Here is a 123-residue protein sequence, read N- to C-terminus: Small ribosomal subunit protein uS12 (123 aa).

Asp89 carries the post-translational modification 3-methylthioaspartic acid. A disordered region spans residues 104-123; the sequence is TQGVKDRRQRRSKYGAKRPK. The span at 110 to 123 shows a compositional bias: basic residues; the sequence is RRQRRSKYGAKRPK.

The protein belongs to the universal ribosomal protein uS12 family. Part of the 30S ribosomal subunit. Contacts proteins S8 and S17. May interact with IF1 in the 30S initiation complex.

Functionally, with S4 and S5 plays an important role in translational accuracy. Interacts with and stabilizes bases of the 16S rRNA that are involved in tRNA selection in the A site and with the mRNA backbone. Located at the interface of the 30S and 50S subunits, it traverses the body of the 30S subunit contacting proteins on the other side and probably holding the rRNA structure together. The combined cluster of proteins S8, S12 and S17 appears to hold together the shoulder and platform of the 30S subunit. The protein is Small ribosomal subunit protein uS12 of Parvibaculum lavamentivorans (strain DS-1 / DSM 13023 / NCIMB 13966).